The primary structure comprises 240 residues: uncharacterized protein (240 aa).

Disordered regions lie at residues 99 to 121 and 136 to 167; these read EPPTVSAPPPPSQFSDEPTSPEL and ATVSSPTSPRPITTESSRVSPTKEKWGRKRVH. Polar residues predominate over residues 137–155; the sequence is TVSSPTSPRPITTESSRVS.

This is an uncharacterized protein from Ictaluridae (bullhead catfishes).